The following is a 481-amino-acid chain: Cardiolipin synthase A (481 aa).

A run of 2 helical transmembrane segments spans residues 10–30 and 40–60; these read FFGYLLGLIHLLGVVAALHAL and IAWAMPLFFIPYLTLIPYLIF. PLD phosphodiesterase domains follow at residues 220 to 247 and 394 to 421; these read VNFRNHRKIVVVDGLLGFIGGHNVGDEY and QPGFLHQKVVLVDDEVSAIGSANLDNRS. Residues histidine 225, lysine 227, aspartate 232, histidine 399, lysine 401, and aspartate 406 contribute to the active site.

The protein belongs to the phospholipase D family. Cardiolipin synthase subfamily. ClsA sub-subfamily.

The protein localises to the cell inner membrane. It carries out the reaction 2 a 1,2-diacyl-sn-glycero-3-phospho-(1'-sn-glycerol) = a cardiolipin + glycerol. In terms of biological role, catalyzes the reversible phosphatidyl group transfer from one phosphatidylglycerol molecule to another to form cardiolipin (CL) (diphosphatidylglycerol) and glycerol. This is Cardiolipin synthase A from Pseudomonas putida (Arthrobacter siderocapsulatus).